We begin with the raw amino-acid sequence, 126 residues long: Probable small nuclear ribonucleoprotein Sm D1 (126 aa).

The Sm domain occupies 2–74; it reads KLVRFLMKLS…IRYIILPDPL (73 aa). The disordered stretch occupies residues 86-126; that stretch reads RKKARAARAGASRGRGRGGMRGGRGGRGRGRGGPRGGGPRR. Residues 99-126 are compositionally biased toward basic residues; that stretch reads GRGRGGMRGGRGGRGRGRGGPRGGGPRR.

The protein belongs to the snRNP core protein family.

It is found in the nucleus. The protein resides in the cytoplasm. The protein localises to the cytosol. Plays a role in pre-mRNA splicing as a core component of the spliceosomal U1, U2, U4 and U5 small nuclear ribonucleoproteins (snRNPs), the building blocks of the spliceosome. In Caenorhabditis elegans, this protein is Probable small nuclear ribonucleoprotein Sm D1 (snr-3).